The chain runs to 251 residues: DNA repair protein RecO (251 aa).

The protein belongs to the RecO family.

Involved in DNA repair and RecF pathway recombination. The sequence is that of DNA repair protein RecO from Nitratidesulfovibrio vulgaris (strain ATCC 29579 / DSM 644 / CCUG 34227 / NCIMB 8303 / VKM B-1760 / Hildenborough) (Desulfovibrio vulgaris).